The sequence spans 509 residues: Sulfoacetate--CoA ligase (509 aa).

Residues 320-340 (AFSNPLDPGQRRIGSIGRPSG) form a disordered region.

This sequence belongs to the ATP-dependent AMP-binding enzyme family.

The protein localises to the cytoplasm. The enzyme catalyses sulfoacetate + ATP + CoA = sulfoacetyl-CoA + AMP + diphosphate. Involved in the degradation of sulfoacetate, a widespread natural product. Catalyzes the CoA- and ATP-dependent conversion of sulfoacetate to sulfoacetyl-CoA and AMP. This is Sulfoacetate--CoA ligase from Cupriavidus necator (strain ATCC 17699 / DSM 428 / KCTC 22496 / NCIMB 10442 / H16 / Stanier 337) (Ralstonia eutropha).